We begin with the raw amino-acid sequence, 247 residues long: ATP synthase subunit a, chloroplastic (247 aa).

5 helical membrane-spanning segments follow: residues 28–48 (GQVL…CLLG), 95–115 (VPFL…GALI), 134–154 (INTT…AGIS), 199–219 (LVVG…IMLL), and 220–240 (GLFT…AYIG).

Belongs to the ATPase A chain family. As to quaternary structure, F-type ATPases have 2 components, CF(1) - the catalytic core - and CF(0) - the membrane proton channel. CF(1) has five subunits: alpha(3), beta(3), gamma(1), delta(1), epsilon(1). CF(0) has four main subunits: a, b, b' and c.

Its subcellular location is the plastid. It is found in the chloroplast thylakoid membrane. Its function is as follows. Key component of the proton channel; it plays a direct role in the translocation of protons across the membrane. In Chlorella vulgaris (Green alga), this protein is ATP synthase subunit a, chloroplastic.